A 319-amino-acid polypeptide reads, in one-letter code: Coproporphyrin III ferrochelatase 2 (319 aa).

Fe-coproporphyrin III-binding positions include Tyr13, Arg30, 46–47 (RY), Ser54, and Tyr125. His181 and Glu262 together coordinate Fe(2+).

The protein belongs to the ferrochelatase family.

It is found in the cytoplasm. It catalyses the reaction Fe-coproporphyrin III + 2 H(+) = coproporphyrin III + Fe(2+). Its pathway is porphyrin-containing compound metabolism; protoheme biosynthesis. Its function is as follows. Involved in coproporphyrin-dependent heme b biosynthesis. Catalyzes the insertion of ferrous iron into coproporphyrin III to form Fe-coproporphyrin III. The polypeptide is Coproporphyrin III ferrochelatase 2 (Bacillus thuringiensis subsp. konkukian (strain 97-27)).